We begin with the raw amino-acid sequence, 448 residues long: DNA repair protein RadA (448 aa).

The C4-type zinc-finger motif lies at 10 to 27; that stretch reads CQHCGFTSPKWLGKCVQC. 96–103 serves as a coordination point for ATP; the sequence is GSPGVGKS. The RadA KNRFG motif signature appears at 253–257; that stretch reads KNRFG. Positions 351 to 448 are lon-protease-like; it reads DVFINVSGGI…NVVGKIVEWM (98 aa).

It belongs to the RecA family. RadA subfamily.

Functionally, DNA-dependent ATPase involved in processing of recombination intermediates, plays a role in repairing DNA breaks. Stimulates the branch migration of RecA-mediated strand transfer reactions, allowing the 3' invading strand to extend heteroduplex DNA faster. Binds ssDNA in the presence of ADP but not other nucleotides, has ATPase activity that is stimulated by ssDNA and various branched DNA structures, but inhibited by SSB. Does not have RecA's homology-searching function. This Helicobacter pylori (strain J99 / ATCC 700824) (Campylobacter pylori J99) protein is DNA repair protein RadA.